We begin with the raw amino-acid sequence, 944 residues long: Protein unc-45 homolog A (944 aa).

A disordered region spans residues 1 to 25 (MTVSGPETPEPRPSDPGASSAEQLR). 3 TPR repeats span residues 21–54 (AEQL…GATP), 58–91 (AILH…DGGD), and 92–125 (VKAL…EPKN). The residue at position 70 (K70) is an N6-acetyllysine. Residue K483 is modified to N6-acetyllysine.

As to quaternary structure, interacts with PGR isoforms A and B as well as with NR3C1 in the absence of ligand, and with HSP90AB1. Binding to HSP90AB1 involves 2 UNC45A monomers per HSP90AB1 dimer. Detected in spleen, bone marrow, lung and ovary, and at lower levels in testis, kidney, heart and brain (at protein level). Ubiquitous. Detected in uterus, large intestine, kidney, spleen, lung, brain, liver and ovary.

It localises to the cytoplasm. The protein resides in the perinuclear region. The protein localises to the nucleus. May act as co-chaperone for HSP90 (Potential). Prevents the stimulation of HSP90AB1 ATPase activity by AHSA1. Positive factor in promoting PGR function in the cell. May be necessary for proper folding of myosin (Potential). Necessary for normal cell proliferation. Necessary for normal myotube formation and myosin accumulation during muscle cell development. May play a role in erythropoiesis in stroma cells in the spleen. This is Protein unc-45 homolog A (Unc45a) from Mus musculus (Mouse).